A 358-amino-acid chain; its full sequence is Peptide chain release factor 1 (358 aa).

An N5-methylglutamine modification is found at glutamine 233.

This sequence belongs to the prokaryotic/mitochondrial release factor family. In terms of processing, methylated by PrmC. Methylation increases the termination efficiency of RF1.

The protein localises to the cytoplasm. Peptide chain release factor 1 directs the termination of translation in response to the peptide chain termination codons UAG and UAA. The sequence is that of Peptide chain release factor 1 from Lachnoclostridium phytofermentans (strain ATCC 700394 / DSM 18823 / ISDg) (Clostridium phytofermentans).